Here is a 383-residue protein sequence, read N- to C-terminus: V-type proton ATPase subunit C 1-A (383 aa).

N-acetylthreonine is present on Thr-2.

This sequence belongs to the V-ATPase C subunit family. In terms of assembly, V-ATPase is a heteromultimeric enzyme made up of two complexes: the ATP-hydrolytic V1 complex and the proton translocation V0 complex. The V1 complex consists of three catalytic AB heterodimers that form a heterohexamer, three peripheral stalks each consisting of EG heterodimers, one central rotor including subunits D and F, and the regulatory subunits C and H. The proton translocation complex V0 consists of the proton transport subunit a, a ring of proteolipid subunits c9c'', rotary subunit d, subunits e and f, and two accessory subunits.

In terms of biological role, subunit of the V1 complex of vacuolar(H+)-ATPase (V-ATPase), a multisubunit enzyme composed of a peripheral complex (V1) that hydrolyzes ATP and a membrane integral complex (V0) that translocates protons. V-ATPase is responsible for acidifying and maintaining the pH of intracellular compartments and in some cell types, is targeted to the plasma membrane, where it is responsible for acidifying the extracellular environment. Subunit C is necessary for the assembly of the catalytic sector of the enzyme and is likely to have a specific function in its catalytic activity. This is V-type proton ATPase subunit C 1-A (atp6v1c1a) from Danio rerio (Zebrafish).